We begin with the raw amino-acid sequence, 179 residues long: Probable chemoreceptor glutamine deamidase CheD 2 (179 aa).

Belongs to the CheD family.

It catalyses the reaction L-glutaminyl-[protein] + H2O = L-glutamyl-[protein] + NH4(+). Functionally, probably deamidates glutamine residues to glutamate on methyl-accepting chemotaxis receptors (MCPs), playing an important role in chemotaxis. The protein is Probable chemoreceptor glutamine deamidase CheD 2 of Ruegeria sp. (strain TM1040) (Silicibacter sp.).